Here is a 385-residue protein sequence, read N- to C-terminus: A-type ATP synthase subunit C (385 aa).

The protein belongs to the V-ATPase V0D/AC39 subunit family. In terms of assembly, has multiple subunits with at least A(3), B(3), C, D, E, F, H, I and proteolipid K(x).

It is found in the cell membrane. Functionally, component of the A-type ATP synthase that produces ATP from ADP in the presence of a proton gradient across the membrane. This is A-type ATP synthase subunit C from Methanothermobacter thermautotrophicus (strain ATCC 29096 / DSM 1053 / JCM 10044 / NBRC 100330 / Delta H) (Methanobacterium thermoautotrophicum).